The primary structure comprises 291 residues: Proteasome subunit beta (291 aa).

A propeptide spans 1–56 (MTRSFPDRLPTNLAFPGISVINQSSFVDLLRRQAPELLPVSLGGGQSGGGQQLSHG) (removed in mature form; by autocatalysis). Residue Thr-57 is the Nucleophile of the active site.

Belongs to the peptidase T1B family. The 20S proteasome core is composed of 14 alpha and 14 beta subunits that assemble into four stacked heptameric rings, resulting in a barrel-shaped structure. The two inner rings, each composed of seven catalytic beta subunits, are sandwiched by two outer rings, each composed of seven alpha subunits. The catalytic chamber with the active sites is on the inside of the barrel. Has a gated structure, the ends of the cylinder being occluded by the N-termini of the alpha-subunits. Is capped by the proteasome-associated ATPase, ARC.

Its subcellular location is the cytoplasm. The catalysed reaction is Cleavage of peptide bonds with very broad specificity.. Its pathway is protein degradation; proteasomal Pup-dependent pathway. Its activity is regulated as follows. The formation of the proteasomal ATPase ARC-20S proteasome complex, likely via the docking of the C-termini of ARC into the intersubunit pockets in the alpha-rings, may trigger opening of the gate for substrate entry. Interconversion between the open-gate and close-gate conformations leads to a dynamic regulation of the 20S proteasome proteolysis activity. Functionally, component of the proteasome core, a large protease complex with broad specificity involved in protein degradation. The polypeptide is Proteasome subunit beta (Mycobacterium leprae (strain Br4923)).